Reading from the N-terminus, the 273-residue chain is Putative phosphoenolpyruvate synthase regulatory protein (273 aa).

153–160 (GVSRSGKT) is an ADP binding site.

It belongs to the pyruvate, phosphate/water dikinase regulatory protein family. PSRP subfamily.

It carries out the reaction [pyruvate, water dikinase] + ADP = [pyruvate, water dikinase]-phosphate + AMP + H(+). The catalysed reaction is [pyruvate, water dikinase]-phosphate + phosphate + H(+) = [pyruvate, water dikinase] + diphosphate. Functionally, bifunctional serine/threonine kinase and phosphorylase involved in the regulation of the phosphoenolpyruvate synthase (PEPS) by catalyzing its phosphorylation/dephosphorylation. The polypeptide is Putative phosphoenolpyruvate synthase regulatory protein (Polaromonas naphthalenivorans (strain CJ2)).